Here is an 823-residue protein sequence, read N- to C-terminus: Leucine--tRNA ligase (823 aa).

A 'HIGH' region motif is present at residues 42–52 (PYPSGTLHMGH). The 'KMSKS' region signature appears at 575-579 (KMSKS). An ATP-binding site is contributed by lysine 578.

Belongs to the class-I aminoacyl-tRNA synthetase family.

It is found in the cytoplasm. It catalyses the reaction tRNA(Leu) + L-leucine + ATP = L-leucyl-tRNA(Leu) + AMP + diphosphate. This is Leucine--tRNA ligase from Legionella pneumophila (strain Paris).